We begin with the raw amino-acid sequence, 492 residues long: MSKASALMVQGTTSDAGKSTLVAGLARALVRRGVRVAPFKPQNMALNSAVTADGGEIGRAQALQAVAARIAPHTDFNPVLLKPSSDIGAQVIIHGKVMANLSARDYHAYKPTAMAAVMASFDRLSAQYEHVLIEGAGSPAEINLRDRDIANMGFAEAADVPVVLVADIDRGGVFAHLVGTLELLSPSEQARVRGFVINRFRGDIALLQPGLDWLTERTGRPVFGVLPYLHGLFLDAEDALANGQVAADRDGAVLKVIAPVYPRISNHTDLDALRLHPQVDFRWVGPGQAIPPADLVVLPGSKSVQADLAWLRAQGWEPALRRHLRYGGKVIGICGGFQMLGSTLADPHGLEGAPSTVAGLGALDIETVLEREKQLVNVRGRLALDGEAAVAGYEIHMGVSRGADLDRPAVLLEDGRADGALSADGQVLGTYLHGLFDTPQAVAALLDWAGLKGAAGVDLNARREADLDRLADAVEAHVDMAALFGAAWPDAA.

In terms of domain architecture, GATase cobBQ-type spans 253–441 (VLKVIAPVYP…LHGLFDTPQA (189 aa)). Residue Cys334 is the Nucleophile of the active site. Residue His433 is part of the active site.

It belongs to the CobB/CobQ family. CobQ subfamily.

It participates in cofactor biosynthesis; adenosylcobalamin biosynthesis. In terms of biological role, catalyzes amidations at positions B, D, E, and G on adenosylcobyrinic A,C-diamide. NH(2) groups are provided by glutamine, and one molecule of ATP is hydrogenolyzed for each amidation. This chain is Cobyric acid synthase, found in Azoarcus sp. (strain BH72).